Here is a 75-residue protein sequence, read N- to C-terminus: UPF0270 protein PFLU_4323 (75 aa).

It belongs to the UPF0270 family.

This chain is UPF0270 protein PFLU_4323, found in Pseudomonas fluorescens (strain SBW25).